The following is a 113-amino-acid chain: Hydrogenase maturation factor HypA (113 aa).

A Ni(2+)-binding site is contributed by His-2. Residues Cys-73, Cys-76, Cys-89, and Cys-92 each contribute to the Zn(2+) site.

The protein belongs to the HypA/HybF family.

In terms of biological role, involved in the maturation of [NiFe] hydrogenases. Required for nickel insertion into the metal center of the hydrogenase. This is Hydrogenase maturation factor HypA from Methylocella silvestris (strain DSM 15510 / CIP 108128 / LMG 27833 / NCIMB 13906 / BL2).